Reading from the N-terminus, the 259-residue chain is Global transcriptional regulator CodY (259 aa).

Residues 1 to 155 are GAF domain; sequence MDLLTRTRKI…GATVVGMEIL (155 aa). A DNA-binding region (H-T-H motif) is located at residues 203-222; sequence ASKIADRVGITRSVIVNALR. Position 215 is a phosphoserine (Ser-215).

It belongs to the CodY family.

The protein localises to the cytoplasm. Functionally, DNA-binding global transcriptional regulator which is involved in the adaptive response to starvation and acts by directly or indirectly controlling the expression of numerous genes in response to nutrient availability. During rapid exponential growth, CodY is highly active and represses genes whose products allow adaptation to nutrient depletion. This chain is Global transcriptional regulator CodY, found in Shouchella clausii (strain KSM-K16) (Alkalihalobacillus clausii).